We begin with the raw amino-acid sequence, 347 residues long: UDP-glucose 4-epimerase (347 aa).

NAD(+)-binding positions include 11 to 13, 32 to 36, 65 to 66, Phe87, and Lys91; these read GYI, DNFHN, and DI. 131–133 is a substrate binding site; it reads SAT. Tyr156 (proton acceptor) is an active-site residue. Lys160 and Tyr184 together coordinate NAD(+). Substrate-binding positions include 184–186, 205–207, 223–225, Arg238, and 299–302; these read YFN, NNL, NVF, and REGD.

Belongs to the NAD(P)-dependent epimerase/dehydratase family. Homodimer. NAD(+) serves as cofactor.

The catalysed reaction is UDP-alpha-D-glucose = UDP-alpha-D-galactose. It carries out the reaction UDP-N-acetyl-alpha-D-glucosamine = UDP-N-acetyl-alpha-D-galactosamine. The protein operates within carbohydrate metabolism; galactose metabolism. Its function is as follows. Catalyzes two distinct but analogous reactions: the reversible epimerization of UDP-glucose to UDP-galactose and the reversible epimerization of UDP-N-acetylglucosamine to UDP-N-acetylgalactosamine. The reaction with UDP-Gal plays a critical role in the Leloir pathway of galactose catabolism in which galactose is converted to the glycolytic intermediate glucose 6-phosphate. It contributes to the catabolism of dietary galactose and enables the endogenous biosynthesis of both UDP-Gal and UDP-GalNAc when exogenous sources are limited. Both UDP-sugar interconversions are important in the synthesis of glycoproteins and glycolipids. The protein is UDP-glucose 4-epimerase (Gale) of Mus musculus (Mouse).